We begin with the raw amino-acid sequence, 331 residues long: (+)-aristolochene synthase TS1 (331 aa).

The segment at 1–22 is disordered; that stretch reads MTRMKNSSSNVTSASGSGSGSG. The span at 7–16 shows a compositional bias: low complexity; that stretch reads SSSNVTSASG. Mg(2+)-binding residues include D102, N231, S235, and E239. Positions 102-106 match the DDxx(x)D/E motif motif; that stretch reads DDLLE. Positions 231–239 match the NDxxSxxxD/E motif motif; it reads NDVYSYEKE. Residues R326 and Y327 each contribute to the (2E,6E)-farnesyl diphosphate site.

The protein belongs to the terpene synthase family. Homodimer. It depends on Mg(2+) as a cofactor.

It catalyses the reaction (2E,6E)-farnesyl diphosphate = (+)-aristolochene + diphosphate. The protein operates within sesquiterpene biosynthesis; aristolochene biosynthesis; aristolochene from farnesyl diphosphate: step 1/1. Its function is as follows. Catalyzes the cyclization of trans,trans-farnesyl diphosphate (FPP) to the bicyclic sesquiterpene aristolochene. Aristolochene is the likely parent compound for a number of sesquiterpenoid toxins produced by filamentous fungi. This chain is (+)-aristolochene synthase TS1, found in Penicillium expansum (Blue mold rot fungus).